A 108-amino-acid chain; its full sequence is Large ribosomal subunit protein uL23 (108 aa).

It belongs to the universal ribosomal protein uL23 family. In terms of assembly, part of the 50S ribosomal subunit. Contacts protein L29, and trigger factor when it is bound to the ribosome.

Functionally, one of the early assembly proteins it binds 23S rRNA. One of the proteins that surrounds the polypeptide exit tunnel on the outside of the ribosome. Forms the main docking site for trigger factor binding to the ribosome. This chain is Large ribosomal subunit protein uL23, found in Polaromonas naphthalenivorans (strain CJ2).